The chain runs to 575 residues: Dihydroxy-acid dehydratase (575 aa).

Positions 1–27 are disordered; the sequence is MSNQERQERPEKDPDLRSTEVTEGYEK. Position 61 (C61) interacts with [2Fe-2S] cluster. D93 is a binding site for Mg(2+). Residue C134 participates in [2Fe-2S] cluster binding. Mg(2+) is bound by residues D135 and K136. Position 136 is an N6-carboxylysine (K136). C206 is a [2Fe-2S] cluster binding site. Mg(2+) is bound at residue E460. Catalysis depends on S486, which acts as the Proton acceptor.

This sequence belongs to the IlvD/Edd family. In terms of assembly, homodimer. It depends on [2Fe-2S] cluster as a cofactor. Mg(2+) is required as a cofactor.

The catalysed reaction is (2R)-2,3-dihydroxy-3-methylbutanoate = 3-methyl-2-oxobutanoate + H2O. It catalyses the reaction (2R,3R)-2,3-dihydroxy-3-methylpentanoate = (S)-3-methyl-2-oxopentanoate + H2O. Its pathway is amino-acid biosynthesis; L-isoleucine biosynthesis; L-isoleucine from 2-oxobutanoate: step 3/4. The protein operates within amino-acid biosynthesis; L-valine biosynthesis; L-valine from pyruvate: step 3/4. Functions in the biosynthesis of branched-chain amino acids. Catalyzes the dehydration of (2R,3R)-2,3-dihydroxy-3-methylpentanoate (2,3-dihydroxy-3-methylvalerate) into 2-oxo-3-methylpentanoate (2-oxo-3-methylvalerate) and of (2R)-2,3-dihydroxy-3-methylbutanoate (2,3-dihydroxyisovalerate) into 2-oxo-3-methylbutanoate (2-oxoisovalerate), the penultimate precursor to L-isoleucine and L-valine, respectively. In Haloarcula marismortui (strain ATCC 43049 / DSM 3752 / JCM 8966 / VKM B-1809) (Halobacterium marismortui), this protein is Dihydroxy-acid dehydratase.